Consider the following 294-residue polypeptide: tRNA dimethylallyltransferase (294 aa).

10–17 is a binding site for ATP; sequence GPTAVGKT. Residue 12–17 participates in substrate binding; it reads TAVGKT. Residues 35-38 form an interaction with substrate tRNA region; the sequence is DSQQ.

It belongs to the IPP transferase family. In terms of assembly, monomer. The cofactor is Mg(2+).

It carries out the reaction adenosine(37) in tRNA + dimethylallyl diphosphate = N(6)-dimethylallyladenosine(37) in tRNA + diphosphate. Functionally, catalyzes the transfer of a dimethylallyl group onto the adenine at position 37 in tRNAs that read codons beginning with uridine, leading to the formation of N6-(dimethylallyl)adenosine (i(6)A). The polypeptide is tRNA dimethylallyltransferase (Streptococcus gordonii (strain Challis / ATCC 35105 / BCRC 15272 / CH1 / DL1 / V288)).